Consider the following 263-residue polypeptide: Tryptophan synthase alpha chain (263 aa).

Active-site proton acceptor residues include E49 and D60.

Belongs to the TrpA family. In terms of assembly, tetramer of two alpha and two beta chains.

It catalyses the reaction (1S,2R)-1-C-(indol-3-yl)glycerol 3-phosphate + L-serine = D-glyceraldehyde 3-phosphate + L-tryptophan + H2O. It participates in amino-acid biosynthesis; L-tryptophan biosynthesis; L-tryptophan from chorismate: step 5/5. Its function is as follows. The alpha subunit is responsible for the aldol cleavage of indoleglycerol phosphate to indole and glyceraldehyde 3-phosphate. The chain is Tryptophan synthase alpha chain from Jannaschia sp. (strain CCS1).